Reading from the N-terminus, the 163-residue chain is Acetolactate synthase small subunit (163 aa).

One can recognise an ACT domain in the interval 4 to 79 (ILSVLLENES…VFKVVNLSEQ (76 aa)).

It belongs to the acetolactate synthase small subunit family. In terms of assembly, dimer of large and small chains.

It catalyses the reaction 2 pyruvate + H(+) = (2S)-2-acetolactate + CO2. Its pathway is amino-acid biosynthesis; L-isoleucine biosynthesis; L-isoleucine from 2-oxobutanoate: step 1/4. It participates in amino-acid biosynthesis; L-valine biosynthesis; L-valine from pyruvate: step 1/4. This chain is Acetolactate synthase small subunit (ilvH), found in Haemophilus influenzae (strain ATCC 51907 / DSM 11121 / KW20 / Rd).